Here is a 378-residue protein sequence, read N- to C-terminus: uncharacterized protein (378 aa).

11 helical membrane passes run serine 12–phenylalanine 34, valine 44–glycine 66, serine 92–isoleucine 112, glycine 132–alanine 154, glutamate 161–threonine 180, threonine 200–methionine 222, valine 235–valine 257, valine 267–alanine 285, leucine 290–isoleucine 312, phenylalanine 327–isoleucine 349, and leucine 356–leucine 373.

It is found in the cell membrane. This is an uncharacterized protein from Aquifex aeolicus (strain VF5).